Here is a 1305-residue protein sequence, read N- to C-terminus: Contactin-associated protein like 5-3 (1305 aa).

Positions 1–24 are cleaved as a signal peptide; it reads MDSVPRLNSVFTLVLSGLWHFGLT. An F5/8 type C domain is found at 25–174; sequence ATNYNCDDPL…IGMRVEVYGC (150 aa). Residues 25–1235 lie on the Extracellular side of the membrane; that stretch reads ATNYNCDDPL…EPLTNAVPSD (1211 aa). 2 Laminin G-like domains span residues 180–360 and 367–544; these read VADF…TFSC and PITF…IDLC. A glycan (N-linked (GlcNAc...) asparagine) is linked at N282. The cysteines at positions 329 and 360 are disulfide-linked. Residue N496 is glycosylated (N-linked (GlcNAc...) asparagine). 3 cysteine pairs are disulfide-bonded: C512/C544, C550/C561, and C555/C570. Residues 546-583 form the EGF-like 1 domain; it reads IKDRCLPNYCEHGGQCAQTWTNFYCNCSDTGYTGATCH. Residue N571 is glycosylated (N-linked (GlcNAc...) asparagine). An intrachain disulfide couples C572 to C582. Residues 584-790 enclose the Fibrinogen C-terminal domain; the sequence is DSIYEQSCEV…LRCYGDRHFW (207 aa). One can recognise a Laminin G-like 3 domain in the interval 791-956; it reads NAVSFSTEAS…KVTSGVRPGC (166 aa). 4 disulfide bridges follow: C929/C956, C960/C973, C967/C982, and C984/C994. The EGF-like 2 domain occupies 957 to 995; it reads PGHCSSYGRNCQNGGKCVEKHIGYSCDCTNSPYEGPFCQ. Positions 1013–1198 constitute a Laminin G-like 4 domain; that stretch reads QEPYSVTKNT…VQRTLTESSC (186 aa). 2 N-linked (GlcNAc...) asparagine glycosylation sites follow: N1023 and N1057. An intrachain disulfide couples C1163 to C1198. A helical transmembrane segment spans residues 1236 to 1256; that stretch reads LAVIGGIIAVVTFISFSVIGI. Topologically, residues 1257 to 1305 are cytoplasmic; the sequence is MTHFFYQHKRSHYASQMKEKEYPENVDSSSRNDIDLQNTTRECKQEDFI.

Belongs to the neurexin family. As to expression, expressed in brain.

It is found in the membrane. May play a role in the correct development and proper functioning of the peripheral and central nervous system and be involved in cell adhesion and intercellular communication. The sequence is that of Contactin-associated protein like 5-3 (Cntnap5c) from Mus musculus (Mouse).